A 214-amino-acid chain; its full sequence is Large ribosomal subunit protein uL3 (214 aa).

N5-methylglutamine is present on Q151.

This sequence belongs to the universal ribosomal protein uL3 family. Part of the 50S ribosomal subunit. Forms a cluster with proteins L14 and L19. Methylated by PrmB.

Its function is as follows. One of the primary rRNA binding proteins, it binds directly near the 3'-end of the 23S rRNA, where it nucleates assembly of the 50S subunit. The protein is Large ribosomal subunit protein uL3 of Saccharophagus degradans (strain 2-40 / ATCC 43961 / DSM 17024).